A 625-amino-acid chain; its full sequence is Interleukin-1 receptor-associated kinase-like 2 (625 aa).

One can recognise a Death domain in the interval 13–94 (LDDLCRNMDA…RAAQIILNWK (82 aa)). The disordered stretch occupies residues 111–181 (KPEKPLAASV…SSDSKDFSTS (71 aa)). A Phosphoserine modification is found at Ser144. The span at 169-181 (LPTSSDSKDFSTS) shows a compositional bias: polar residues. A Protein kinase domain is found at 210–489 (FNQNRKISQG…LCLRRRNTSL (280 aa)). ATP contacts are provided by residues 216–224 (ISQGTFADV), Lys237, and 337–340 (KSSN). The segment at 510–540 (LPWSGLSEGTGSSSNTPEETDDVDNSSLDAS) is disordered. Residues 516-526 (SEGTGSSSNTP) show a composition bias toward polar residues.

It belongs to the protein kinase superfamily. TKL Ser/Thr protein kinase family. Pelle subfamily. As to quaternary structure, interacts with MYD88. IL-1 stimulation leads to the formation of a signaling complex which dissociates from the IL-1 receptor following the binding of PELI1. As to expression, expressed in spleen, thymus, prostate, lung, liver, skeletal muscle, kidney, pancreas and peripheral blood leukocytes.

Binds to the IL-1 type I receptor following IL-1 engagement, triggering intracellular signaling cascades leading to transcriptional up-regulation and mRNA stabilization. The protein is Interleukin-1 receptor-associated kinase-like 2 (IRAK2) of Homo sapiens (Human).